A 221-amino-acid polypeptide reads, in one-letter code: Ribosomal RNA large subunit methyltransferase E (221 aa).

Glycine 60, tryptophan 62, aspartate 89, aspartate 105, and aspartate 134 together coordinate S-adenosyl-L-methionine. The active-site Proton acceptor is lysine 174.

This sequence belongs to the class I-like SAM-binding methyltransferase superfamily. RNA methyltransferase RlmE family.

It localises to the cytoplasm. The enzyme catalyses uridine(2552) in 23S rRNA + S-adenosyl-L-methionine = 2'-O-methyluridine(2552) in 23S rRNA + S-adenosyl-L-homocysteine + H(+). Specifically methylates the uridine in position 2552 of 23S rRNA at the 2'-O position of the ribose in the fully assembled 50S ribosomal subunit. The chain is Ribosomal RNA large subunit methyltransferase E from Cupriavidus metallidurans (strain ATCC 43123 / DSM 2839 / NBRC 102507 / CH34) (Ralstonia metallidurans).